The primary structure comprises 310 residues: MSNQVLCCVVLCLLGANTVDGGITQSPKYLFRKEGQNVTLSCEQNLNHDAMYWYRQDPGQGLRLIYYSQIVNDFQKGDIAEGYSVSREKKESFPLTVTSAQKNPTAFYLCASSIRSSYEQYFGPGTRLTVTEDLKNVFPPKVAVFEPSEAEISHTQKATLVCLATGFYPDHVELSWWVNGKEVHSGVSTDPQPLKEQPALNDSRYCLSSRLRVSATFWQNPRNHFRCQVQFYGLSENDEWTQDRAKPVTQIVSAEAWGRADCGFTSESYQQGVLSATILYEILLGKATLYAVLVSALVLMAMVKRKDSRG.

An N-terminal signal peptide occupies residues 1–21 (MSNQVLCCVVLCLLGANTVDG). The tract at residues 22-114 (GITQSPKYLF…TAFYLCASSI (93 aa)) is t cell receptor beta variable 19. The 98-residue stretch at 34–131 (EGQNVTLSCE…FGPGTRLTVT (98 aa)) folds into the Ig-like V-type domain. N-linked (GlcNAc...) asparagine glycosylation occurs at N37. Residues C42 and C110 are joined by a disulfide bond. The segment at 46 to 50 (LNHDA) is CDR1. D49 contributes to the a peptide antigen binding site. Positions 68–73 (SQIVND) are CDR2. The segment at 110–122 (CASSIRSSYEQYF) is CDR3. Residues 117-131 (SYEQYFGPGTRLTVT) are t cell receptor beta joining 2-7. The segment at 133–310 (DLKNVFPPKV…AMVKRKDSRG (178 aa)) is t cell receptor beta constant 2. In terms of domain architecture, Ig-like C1-type spans 140 to 249 (PKVAVFEPSE…WTQDRAKPVT (110 aa)). C162 and C227 are joined by a disulfide. N201 carries an N-linked (GlcNAc...) asparagine glycan. A connecting peptide region spans residues 262 to 276 (CGFTSESYQQGVLSA). Residues 277–299 (TILYEILLGKATLYAVLVSALVL) traverse the membrane as a helical segment. Residues 300-310 (MAMVKRKDSRG) are Cytoplasmic-facing.

Disulfide-linked heterodimer with TRAV27*01J42*01C*01 alpha chain. The TR primarily interacts via its CDR3-beta domain with M/matrix protein 1-derived peptide (GILGFVFTL) displayed by HLA-A*02.01 in a 'peg-notch' recognition mode. The alpha-beta TR associates with the transmembrane signaling CD3 coreceptor proteins to form the TR-CD3 (TCR). The assembly of alpha-beta TR heterodimers with CD3 occurs in the endoplasmic reticulum where a single alpha-beta TR heterodimer associates with one CD3D-CD3E heterodimer, one CD3G-CD3E heterodimer and one CD247 homodimer forming a stable octameric structure. CD3D-CD3E and CD3G-CD3E heterodimers preferentially associate with TR alpha and TR beta chains (via TM domain), respectively. The association of the CD247 homodimer is the last step of TCR assembly in the endoplasmic reticulum and is required for transport to the cell surface. In terms of tissue distribution, expressed in M/matrix protein 1-specific effector memory CD8-positive T cells readily detectable in the peripheral blood, secondary lymphoid organs and lung (primary site of infection) of IAV infected individuals.

The protein resides in the cell membrane. Functionally, the beta chain of TRAV27*01J42*01C*01/TRBV19*01J2S7*01C*02 alpha-beta T cell receptor (TR) clonotype that is specific for HLA-A*02:01-restricted M/matrix protein 1 immunodominant epitope GILGFVFTL of influenza A virus (IAV). Classified as a public TCR clonotype, it is preferentially selected in effector memory CD8-positive T cells among multiple HLA-A*02:01 carriers/individuals and confers long-lived immunity against IAV infection. Can cross-recognize sporadically emerging IAV variants by molecular mimicry, inducing immunity toward different influenza strains. Antigen recognition initiates TR-CD3 clustering on the cell surface and intracellular activation of LCK that phosphorylates the ITAM motifs of CD3G, CD3D, CD3E and CD247 enabling the recruitment of ZAP70. In turn, ZAP70 phosphorylates LAT, which recruits numerous signaling molecules to form the LAT signalosome. The LAT signalosome propagates signal branching to three major signaling pathways, the calcium, the mitogen-activated protein kinase (MAPK) kinase and the nuclear factor NF-kappa-B (NF-kB) pathways, leading to the mobilization of transcription factors that are critical for gene expression and essential for T cell differentiation into effector/memory T cells. This chain is M1-specific T cell receptor beta chain, found in Homo sapiens (Human).